We begin with the raw amino-acid sequence, 485 residues long: Probable alginate O-acetylase AlgI (485 aa).

A run of 9 helical transmembrane segments spans residues Val7–Gly24, Phe39–Ile61, Trp78–Val100, Phe115–Ile137, Asn150–Phe172, Phe312–Trp334, Ala360–Ala382, Ala402–Leu424, and Ile461–Phe483. His322 is an active-site residue.

This sequence belongs to the membrane-bound acyltransferase family.

The protein resides in the cell inner membrane. It functions in the pathway glycan biosynthesis; alginate biosynthesis. Its function is as follows. Together with AlgJ and AlgF, forms an inner membrane complex which probably interacts with the alginate polymerization-transport complex and adds acetyl groups at the O-2 and O-3 positions of mannuronate residues. Acetylation of alginate is important for the architecture of biofilms and increases the ability of alginate to act as a defense barrier. This Pseudomonas putida (strain ATCC 47054 / DSM 6125 / CFBP 8728 / NCIMB 11950 / KT2440) protein is Probable alginate O-acetylase AlgI (algI).